Consider the following 123-residue polypeptide: Large ribosomal subunit protein bL12 (123 aa).

This sequence belongs to the bacterial ribosomal protein bL12 family. As to quaternary structure, homodimer. Part of the ribosomal stalk of the 50S ribosomal subunit. Forms a multimeric L10(L12)X complex, where L10 forms an elongated spine to which 2 to 4 L12 dimers bind in a sequential fashion. Binds GTP-bound translation factors.

Functionally, forms part of the ribosomal stalk which helps the ribosome interact with GTP-bound translation factors. Is thus essential for accurate translation. This Bartonella bacilliformis (strain ATCC 35685 / KC583 / Herrer 020/F12,63) protein is Large ribosomal subunit protein bL12.